We begin with the raw amino-acid sequence, 1049 residues long: Desmoglein-1 (1049 aa).

The N-terminal stretch at 1–23 is a signal peptide; that stretch reads MDWSFFRVVAMLFIFLVVVEVNS. The propeptide occupies 24–49; the sequence is EFRIQVRDYNTKNGTIKWHSIRRQKR. N36, N110, and N180 each carry an N-linked (GlcNAc...) asparagine glycan. 4 Cadherin domains span residues 50-158, 159-270, 271-385, and 386-497; these read EWIK…PVFS, MATF…PYME, QSSY…GPVF, and RPGS…TEPN. Residues 50 to 548 are Extracellular-facing; the sequence is EWIKFAAACR…LLSDNVHFGP (499 aa). Residues 485-534 are disordered; it reads SFGNDDRTNTEPNTKITTNTGRQESTSSTNYDTSTTSTDSSQVYSSEPGN. Over residues 494–508 the composition is skewed to polar residues; it reads TEPNTKITTNTGRQE. Residues 509-530 show a composition bias toward low complexity; the sequence is STSSTNYDTSTTSTDSSQVYSS. The chain crosses the membrane as a helical span at residues 549–569; that stretch reads AGIGLLIMGFLVLGLVPFLMI. Residues 570–1049 lie on the Cytoplasmic side of the membrane; sequence CCDCGGAPRS…TKYSTVQYSK (480 aa). Phosphoserine is present on S579. 5 Desmoglein repeat repeats span residues 813-839, 840-869, 870-899, 900-927, and 928-956; these read TYPSGPGVLHPKPILDPLGYGNVTVTE, SYTTSDTLKPSVHVHDNRPASNVVVTERVV, GPISGADLHGMLEMPDLRDGSNVIVTERVI, APSSSLPTSLTIHHPRESSNVVVTERVI, and QPTSGMIGSLSMHPELANAHNVIVTERVV. A disordered region spans residues 1014–1035; the sequence is HMRSSSDHHFNQTIGSASPSTA. Over residues 1024-1035 the composition is skewed to polar residues; sequence NQTIGSASPSTA.

As to quaternary structure, binds to JUP/plakoglobin. Interacts with PKP2. Interacts with DSC3; there is evidence to suggest that the interaction promotes cell-cell adhesion of keratinocytes. (Microbial infection) Interacts with Staphylococcus aureus protein SdrD; this interaction increases S.aureus adherence to keratinocytes. Expressed in all suprabasal layers of the epidermis, with the highest expression seen in the granular layer (at protein level).

Its subcellular location is the cell membrane. The protein resides in the cell junction. It is found in the desmosome. The protein localises to the cytoplasm. It localises to the nucleus. Component of intercellular desmosome junctions. Involved in the interaction of plaque proteins and intermediate filaments mediating cell-cell adhesion. The sequence is that of Desmoglein-1 (DSG1) from Homo sapiens (Human).